We begin with the raw amino-acid sequence, 375 residues long: Erythronate-4-phosphate dehydrogenase (375 aa).

Residues serine 45 and threonine 67 each contribute to the substrate site. Aspartate 147 serves as a coordination point for NAD(+). Arginine 209 is a catalytic residue. Position 233 (aspartate 233) interacts with NAD(+). Glutamate 238 is a catalytic residue. Histidine 255 (proton donor) is an active-site residue. An NAD(+)-binding site is contributed by glycine 258. Tyrosine 259 contributes to the substrate binding site.

Belongs to the D-isomer specific 2-hydroxyacid dehydrogenase family. PdxB subfamily. Homodimer.

It is found in the cytoplasm. It carries out the reaction 4-phospho-D-erythronate + NAD(+) = (R)-3-hydroxy-2-oxo-4-phosphooxybutanoate + NADH + H(+). Its pathway is cofactor biosynthesis; pyridoxine 5'-phosphate biosynthesis; pyridoxine 5'-phosphate from D-erythrose 4-phosphate: step 2/5. Its function is as follows. Catalyzes the oxidation of erythronate-4-phosphate to 3-hydroxy-2-oxo-4-phosphonooxybutanoate. The protein is Erythronate-4-phosphate dehydrogenase of Shewanella amazonensis (strain ATCC BAA-1098 / SB2B).